The following is a 422-amino-acid chain: UDP-N-acetylmuramoylalanine--D-glutamate ligase (422 aa).

102 to 108 provides a ligand contact to ATP; the sequence is GTNGKTT.

It belongs to the MurCDEF family.

Its subcellular location is the cytoplasm. The catalysed reaction is UDP-N-acetyl-alpha-D-muramoyl-L-alanine + D-glutamate + ATP = UDP-N-acetyl-alpha-D-muramoyl-L-alanyl-D-glutamate + ADP + phosphate + H(+). Its pathway is cell wall biogenesis; peptidoglycan biosynthesis. Its function is as follows. Cell wall formation. Catalyzes the addition of glutamate to the nucleotide precursor UDP-N-acetylmuramoyl-L-alanine (UMA). This chain is UDP-N-acetylmuramoylalanine--D-glutamate ligase, found in Helicobacter pylori (strain HPAG1).